Consider the following 308-residue polypeptide: UPF0282 protein STK_23220 (308 aa).

It belongs to the UPF0282 family.

This is UPF0282 protein STK_23220 from Sulfurisphaera tokodaii (strain DSM 16993 / JCM 10545 / NBRC 100140 / 7) (Sulfolobus tokodaii).